Here is a 260-residue protein sequence, read N- to C-terminus: Hydroxyacylglutathione hydrolase (260 aa).

Residues histidine 61, histidine 63, aspartate 65, histidine 66, histidine 119, aspartate 138, and histidine 176 each contribute to the Zn(2+) site.

It belongs to the metallo-beta-lactamase superfamily. Glyoxalase II family. Monomer. Zn(2+) is required as a cofactor.

It carries out the reaction an S-(2-hydroxyacyl)glutathione + H2O = a 2-hydroxy carboxylate + glutathione + H(+). Its pathway is secondary metabolite metabolism; methylglyoxal degradation; (R)-lactate from methylglyoxal: step 2/2. Its function is as follows. Thiolesterase that catalyzes the hydrolysis of S-D-lactoyl-glutathione to form glutathione and D-lactic acid. This is Hydroxyacylglutathione hydrolase from Brucella suis (strain ATCC 23445 / NCTC 10510).